The chain runs to 421 residues: Probable pectate lyase C (421 aa).

The first 19 residues, 1–19 (MQPLHTLLALLPLCRSTTA), serve as a signal peptide directing secretion. Residues Asn164 and Asn201 are each glycosylated (N-linked (GlcNAc...) asparagine). Arg204 is a catalytic residue. In terms of domain architecture, EF-hand spans 257-292 (NENFHGYVENNYYDPDQDGTLNGNELGVSSSNYGGM). Ca(2+)-binding residues include Asp270, Asp272, Asp274, Thr276, and Glu281. The interval 353–376 (DFGGVGDLDGGETPTDTDGDGIPD) is disordered. Over residues 367–376 (TDTDGDGIPD) the composition is skewed to acidic residues.

This sequence belongs to the polysaccharide lyase 1 family. Requires Ca(2+) as cofactor.

Its subcellular location is the secreted. It catalyses the reaction Eliminative cleavage of (1-&gt;4)-alpha-D-galacturonan to give oligosaccharides with 4-deoxy-alpha-D-galact-4-enuronosyl groups at their non-reducing ends.. In terms of biological role, pectinolytic enzyme consist of four classes of enzymes: pectin lyase, polygalacturonase, pectin methylesterase and rhamnogalacturonase. Among pectinolytic enzymes, pectin lyase is the most important in depolymerization of pectin, since it cleaves internal glycosidic bonds of highly methylated pectins. Favors pectate, the anion, over pectin, the methyl ester. This chain is Probable pectate lyase C (plyC), found in Emericella nidulans (strain FGSC A4 / ATCC 38163 / CBS 112.46 / NRRL 194 / M139) (Aspergillus nidulans).